We begin with the raw amino-acid sequence, 260 residues long: Proteasome subunit alpha (260 aa).

Belongs to the peptidase T1A family. As to quaternary structure, the 20S proteasome core is composed of 14 alpha and 14 beta subunits that assemble into four stacked heptameric rings, resulting in a barrel-shaped structure. The two inner rings, each composed of seven catalytic beta subunits, are sandwiched by two outer rings, each composed of seven alpha subunits. The catalytic chamber with the active sites is on the inside of the barrel. Has a gated structure, the ends of the cylinder being occluded by the N-termini of the alpha-subunits. Is capped at one or both ends by the proteasome regulatory ATPase, PAN.

The protein localises to the cytoplasm. With respect to regulation, the formation of the proteasomal ATPase PAN-20S proteasome complex, via the docking of the C-termini of PAN into the intersubunit pockets in the alpha-rings, triggers opening of the gate for substrate entry. Interconversion between the open-gate and close-gate conformations leads to a dynamic regulation of the 20S proteasome proteolysis activity. Its function is as follows. Component of the proteasome core, a large protease complex with broad specificity involved in protein degradation. This Pyrococcus abyssi (strain GE5 / Orsay) protein is Proteasome subunit alpha.